Here is a 121-residue protein sequence, read N- to C-terminus: Small ribosomal subunit protein uS13 (121 aa).

The tract at residues 88–121 is disordered; the sequence is GMRHRRGLPTRGQNTKNNARTRKGPAKSIAGKKK. Basic residues predominate over residues 106–121; the sequence is ARTRKGPAKSIAGKKK.

Belongs to the universal ribosomal protein uS13 family. Part of the 30S ribosomal subunit. Forms a loose heterodimer with protein S19. Forms two bridges to the 50S subunit in the 70S ribosome.

Its function is as follows. Located at the top of the head of the 30S subunit, it contacts several helices of the 16S rRNA. In the 70S ribosome it contacts the 23S rRNA (bridge B1a) and protein L5 of the 50S subunit (bridge B1b), connecting the 2 subunits; these bridges are implicated in subunit movement. Contacts the tRNAs in the A and P-sites. The sequence is that of Small ribosomal subunit protein uS13 from Lactococcus lactis subsp. cremoris (strain MG1363).